Here is a 127-residue protein sequence, read N- to C-terminus: MSCLLIVARTTSGKLCWCWNPFSTTLKTSAEMMMKMKIMWTIARATKKAYLAGMWKEMIMWLSVILSLIQGSLHWKKYVKLLQDRNGYKEKSKEKKQDPAFSFEPWRMLMHSLFIWYQIVVQMIYIC.

This is Putative platinum sensitivity protein 1 (PSY1) from Saccharomyces cerevisiae (strain ATCC 204508 / S288c) (Baker's yeast).